Reading from the N-terminus, the 276-residue chain is Undecaprenyl-diphosphatase (276 aa).

8 helical membrane passes run 1 to 21 (MSWL…FLPV), 39 to 59 (AGAS…LVYF), 84 to 104 (YRLG…GLLL), 115 to 135 (LWAI…AEYF), 159 to 179 (LALL…LFLG), 190 to 210 (FLLA…DAFA), 222 to 242 (QLLV…AWFL), and 253 to 273 (FVGY…TGVV).

It belongs to the UppP family.

It localises to the cell membrane. The catalysed reaction is di-trans,octa-cis-undecaprenyl diphosphate + H2O = di-trans,octa-cis-undecaprenyl phosphate + phosphate + H(+). In terms of biological role, catalyzes the dephosphorylation of undecaprenyl diphosphate (UPP). Confers resistance to bacitracin. The polypeptide is Undecaprenyl-diphosphatase (Mycobacterium sp. (strain KMS)).